The primary structure comprises 357 residues: MSKSKSSRSTDIIDIYAKPDIKLKVLEPRQDRELRVELEGRSINHAIVNAVRRSVMLYVPIYGFHRSNIHIELNKFKNMYNFDLMYNIFETLPIFDVPNFMDLIDPDVYLPVELSKNLFGRFVQEQYTEQSDQEDKLVDATKKLFKIELTLNYKNNTADDKYISSHDCVIKIDGKTSDGYLKRRPICLFVLKPSEEISLRAEANLGIAKNFAAYEATTNAIHEEKNPNKYVITYKTLEQLNKYVILNKACTIIYKKLENLQDYLLRTYTEDRDPTEQIDIELYGEDHTLGTILENVLQQCEYVEKAGYCMPHLLIDKILVSYKLYDDSEIGPIKVLNDCITYLIKLYKQLADLVPKK.

The protein belongs to the archaeal Rpo11/eukaryotic RPB11/RPC19 RNA polymerase subunit family.

The protein resides in the virion. The catalysed reaction is RNA(n) + a ribonucleoside 5'-triphosphate = RNA(n+1) + diphosphate. The sequence is that of Putative DNA directed RNA polymerase subunit R470 from Acanthamoeba polyphaga mimivirus (APMV).